Here is a 382-residue protein sequence, read N- to C-terminus: MKALHFGAGNIGRGFIGKLLADAGIQLTFADVNQVVLDALNARHSYQVHVVGETEQVDTVSGVDAVSSIGDDVVDLIAQVDLVTTAVGPVVLERIAPAIAKGLVKRKEQGNESPLNIIACENMVRGTTQLKGHVMNALPEDAKAWVEEHVGFVDSAVDRIVPPSASATNDPLEVTVETFSEWIVDKTQFKGALPNIPGMELTDNLMAFVERKLFTLNTGHAITAYLGKLAGHQTIRDAILDEKIRAVVKGAMEESGAVLIKRYGFDADKHAAYIQKILGRFENPYLKDDVERVGRQPLRKLSAGDRLIKPLLGTLEYSLPHKNLIQGIAGAMHFRSEDDPQAQELAALIADKGPQAALAQISGLDANSEVVSEAVTAYKAMQ.

3–14 (ALHFGAGNIGRG) is a binding site for NAD(+). Lysine 269 carries the post-translational modification N6-acetyllysine.

The protein belongs to the mannitol dehydrogenase family.

The catalysed reaction is D-mannitol 1-phosphate + NAD(+) = beta-D-fructose 6-phosphate + NADH + H(+). The chain is Mannitol-1-phosphate 5-dehydrogenase from Escherichia coli (strain ATCC 8739 / DSM 1576 / NBRC 3972 / NCIMB 8545 / WDCM 00012 / Crooks).